The sequence spans 79 residues: Acyl carrier protein (79 aa).

Positions 4–79 constitute a Carrier domain; it reads AEIKDKVYDI…QAIDYIVNKK (76 aa). The residue at position 39 (serine 39) is an O-(pantetheine 4'-phosphoryl)serine.

It belongs to the acyl carrier protein (ACP) family. 4'-phosphopantetheine is transferred from CoA to a specific serine of apo-ACP by AcpS. This modification is essential for activity because fatty acids are bound in thioester linkage to the sulfhydryl of the prosthetic group.

The protein resides in the cytoplasm. Its pathway is lipid metabolism; fatty acid biosynthesis. In terms of biological role, carrier of the growing fatty acid chain in fatty acid biosynthesis. The polypeptide is Acyl carrier protein (Pelodictyon phaeoclathratiforme (strain DSM 5477 / BU-1)).